The sequence spans 142 residues: Large ribosomal subunit protein bL19 (142 aa).

The protein belongs to the bacterial ribosomal protein bL19 family.

Its function is as follows. This protein is located at the 30S-50S ribosomal subunit interface and may play a role in the structure and function of the aminoacyl-tRNA binding site. The polypeptide is Large ribosomal subunit protein bL19 (Psychrobacter cryohalolentis (strain ATCC BAA-1226 / DSM 17306 / VKM B-2378 / K5)).